An 818-amino-acid polypeptide reads, in one-letter code: Dapper 1-A (818 aa).

A compositionally biased stretch (pro residues) spans 1-10 (MKPIPSPEPP). Disordered stretches follow at residues 1–30 (MKPI…WERH), 60–80 (VLSP…PRSD), 122–144 (IDSE…LSDG), 455–486 (NVTP…SALL), and 510–530 (ESSS…SSSQ). Residues 1–337 (MKPIPSPEPP…PVRTNKPRTS (337 aa)) are interaction with tcf7l1-A. Residues 21–30 (DKGEAEWERH) show a composition bias toward basic and acidic residues. Positions 79-130 (SDEQKLLEENISLLKKQLNCLRKRDAGLLSQLHELDKQINDLKIDSEKTEET) form a coiled coil. Over residues 122-132 (IDSEKTEETDS) the composition is skewed to basic and acidic residues. Polar residues predominate over residues 455–485 (NVTPNAPANLPNASSSVCNGSPRESTQNSAL). Basic and acidic residues predominate over residues 512-524 (SSFEERPPLDFKS). Residues 815 to 818 (MTTV) carry the PDZ-binding motif.

It belongs to the dapper family. In terms of assembly, interacts with dbf4 and tcf7l1-A. Interacts with dvl2/dsh via the C-terminus. Expressed in the animal and dorsal marginal regions at late blastula and early gastrula stages. Expressed predominantly in the anterior neural plate at neurulation. Expressed mainly in the ectodermal placodes, including the eye anlagen and the otic vesicle, at later stages of development.

It localises to the cytoplasm. The protein localises to the nucleus. Involved in regulation of intracellular signaling pathways during development. Specifically thought to play a role in canonical and/or non-canonical Wnt signaling pathways through interaction with DSH (Dishevelled) family proteins. Binds to dvl2/dsh and impedes the degradation of beta-catenin (ctnnb1-A and possibly ctnnb1-B), thereby enhancing the transcriptional activation of target genes of the Wnt signaling pathway. Also promotes catenin delta/ctnnd1 stability which in turn promotes zbtb33/kaiso sequestration and thus is involved in the regulation of zbtb33/kaiso-mediated transcriptional repression. May also bind to and directly stimulate the transcriptional activity of tcf7l1-A. Required for eye development and neural patterning. The protein is Dapper 1-A (dact1-a) of Xenopus laevis (African clawed frog).